We begin with the raw amino-acid sequence, 339 residues long: MDSTSSLHGSSLHRPSTEQTRTDFSWDGINLSMEDTTSILPKLKRNSNAYGIGALAKSSFSGISRSMKDHVTKPTAMGQGRVAHMIEWQGWGKTPAIQPQHSHEAVRRDTDAYSDLSDGEKEARFLAGVMEQFAISEATLMAWSSMDGEDMSVNSTQETLGCNYSDNYQELMESQDALAQAPMDGWPHSYVSQGMYCLGSSDAWEASDQSLIASPATGSYLGPAFGDSQPSLHEMGPSQPASGYSAQEPSSLLGGDTDWAPGVGGVDLAGGPAEEEKRKKMRGAGTWSPSPHARTPRCPPLSAGRCLTSHPQACSPLMRRKARPTTSFLPLLTQPSTPA.

A disordered region spans residues Met-1 to Thr-22. Phosphoserine is present on residues Ser-47, Ser-114, and Ser-117. Residues Gly-222 to Ala-339 form a disordered region. Polar residues-rich tracts occupy residues Gln-239 to Ser-250 and Pro-324 to Ala-339. Thr-325 is subject to Phosphothreonine. Ser-327 is subject to Phosphoserine.

This sequence belongs to the FAM131 family.

In Bos taurus (Bovine), this protein is Protein FAM131B (FAM131B).